Reading from the N-terminus, the 558-residue chain is DALR anticodon-binding domain-containing protein 3 (558 aa).

The disordered stretch occupies residues 213-240 (KALENSAYRDRETEKGKRRSRGEEIEGE).

The chain is DALR anticodon-binding domain-containing protein 3 (dalrd3) from Danio rerio (Zebrafish).